A 271-amino-acid polypeptide reads, in one-letter code: Putative phosphoenolpyruvate synthase regulatory protein (271 aa).

G151–T158 contributes to the ADP binding site.

The protein belongs to the pyruvate, phosphate/water dikinase regulatory protein family. PSRP subfamily.

The catalysed reaction is [pyruvate, water dikinase] + ADP = [pyruvate, water dikinase]-phosphate + AMP + H(+). It catalyses the reaction [pyruvate, water dikinase]-phosphate + phosphate + H(+) = [pyruvate, water dikinase] + diphosphate. Its function is as follows. Bifunctional serine/threonine kinase and phosphorylase involved in the regulation of the phosphoenolpyruvate synthase (PEPS) by catalyzing its phosphorylation/dephosphorylation. In Burkholderia vietnamiensis (strain G4 / LMG 22486) (Burkholderia cepacia (strain R1808)), this protein is Putative phosphoenolpyruvate synthase regulatory protein.